Here is a 321-residue protein sequence, read N- to C-terminus: Basic endochitinase A (321 aa).

The N-terminal stretch at 1-19 is a signal peptide; the sequence is MGAFALFAVLAMAVTMAVA. A Chitin-binding type-1 domain is found at 20 to 60; the sequence is EQCGSQAGGATCPNCLCCSRFGWCGSTSDYCGDGCQSQCAG. 5 disulfide bridges follow: Cys22–Cys37, Cys31–Cys43, Cys34–Cys61, Cys36–Cys50, and Cys54–Cys58. The hinge region (Gly/Pro/Thr-rich) stretch occupies residues 62–79; it reads GGGGTPVTPTPTPSGGGG. The segment at 80-321 is catalytic; sequence VSSIVSRALF…LDCYNQRPFA (242 aa). 3 disulfide bridges follow: Cys101–Cys163, Cys175–Cys183, and Cys301–Cys314. Catalysis depends on Glu145, which acts as the Proton donor.

It belongs to the glycosyl hydrolase 19 family. Chitinase class I subfamily. Localized in the aleurone cells of the seed endosperm (at protein level).

It carries out the reaction Random endo-hydrolysis of N-acetyl-beta-D-glucosaminide (1-&gt;4)-beta-linkages in chitin and chitodextrins.. Functionally, defense against chitin-containing fungal pathogens. Binds the hyphal tips, lateral walls and septa of fungi and degrades mature chitin. This is Basic endochitinase A from Secale cereale (Rye).